We begin with the raw amino-acid sequence, 363 residues long: NAD(P)H-quinone oxidoreductase subunit 1, chloroplastic (363 aa).

7 consecutive transmembrane segments (helical) span residues 28–48, 98–118, 129–149, 253–273, 274–294, 300–320, and 336–356; these read WVLA…LVIV, FSIG…VIPF, IGIF…LMSG, FGLF…FVTV, LYLG…LVEI, IFGT…FLFI, and LLNL…LLTT.

Belongs to the complex I subunit 1 family. In terms of assembly, NDH is composed of at least 16 different subunits, 5 of which are encoded in the nucleus.

Its subcellular location is the plastid. It localises to the chloroplast thylakoid membrane. The enzyme catalyses a plastoquinone + NADH + (n+1) H(+)(in) = a plastoquinol + NAD(+) + n H(+)(out). It carries out the reaction a plastoquinone + NADPH + (n+1) H(+)(in) = a plastoquinol + NADP(+) + n H(+)(out). In terms of biological role, NDH shuttles electrons from NAD(P)H:plastoquinone, via FMN and iron-sulfur (Fe-S) centers, to quinones in the photosynthetic chain and possibly in a chloroplast respiratory chain. The immediate electron acceptor for the enzyme in this species is believed to be plastoquinone. Couples the redox reaction to proton translocation, and thus conserves the redox energy in a proton gradient. The chain is NAD(P)H-quinone oxidoreductase subunit 1, chloroplastic from Citrus sinensis (Sweet orange).